The chain runs to 556 residues: M-phase inducer phosphatase (556 aa).

Disordered regions lie at residues 165 to 186 (STDG…QERR) and 257 to 297 (TSGL…RPRK). The segment covering 287–297 (KSAHPNMRPRK) has biased composition (basic residues). The Rhodanese domain maps to 371-474 (MFDNIMIIDC…FFAEHRSLCY (104 aa)). Cys421 is a catalytic residue. Polar residues predominate over residues 505 to 516 (RAQTFAFGQQSP). Residues 505 to 556 (RAQTFAFGQQSPEMEDSPTGRCRNNPGDRKLLASPFNDSPGSRFPGRRMLSY) are disordered.

Belongs to the MPI phosphatase family.

It catalyses the reaction O-phospho-L-tyrosyl-[protein] + H2O = L-tyrosyl-[protein] + phosphate. Functionally, this protein functions as a dosage-dependent inducer in mitotic control. It is a tyrosine protein phosphatase required for progression of the cell cycle. It may directly dephosphorylate p34(cdc2) and activate the p34(cdc2) kinase activity. This is M-phase inducer phosphatase (nimT) from Emericella nidulans (strain FGSC A4 / ATCC 38163 / CBS 112.46 / NRRL 194 / M139) (Aspergillus nidulans).